A 163-amino-acid chain; its full sequence is Large ribosomal subunit protein uL10 (163 aa).

The protein belongs to the universal ribosomal protein uL10 family. Part of the ribosomal stalk of the 50S ribosomal subunit. The N-terminus interacts with L11 and the large rRNA to form the base of the stalk. The C-terminus forms an elongated spine to which L12 dimers bind in a sequential fashion forming a multimeric L10(L12)X complex.

Its function is as follows. Forms part of the ribosomal stalk, playing a central role in the interaction of the ribosome with GTP-bound translation factors. The sequence is that of Large ribosomal subunit protein uL10 from Actinobacillus pleuropneumoniae serotype 5b (strain L20).